The following is a 558-amino-acid chain: WW domain-containing adapter protein with coiled-coil (558 aa).

Disordered stretches follow at residues 1 to 129 (MVMY…WSEH), 159 to 244 (QRQK…SPAP), and 321 to 461 (VAQQ…APGR). Residues 22–32 (QPYQTLKYSSK) are compositionally biased toward polar residues. 2 stretches are compositionally biased toward basic and acidic residues: residues 33–46 (SHPDHRHEKMRDSN) and 56–70 (RRSDSPDNKHMDNTG). Basic residues predominate over residues 72-82 (GRAKAIHPHRG). Low complexity predominate over residues 99–116 (NHSSLHSSNSHSNPNKSS). The 34-residue stretch at 120–153 (FEPADDWSEHISSSGKKYYYNCRTEVSQWEKPKE) folds into the WW domain. The segment covering 175–184 (PKDRDYRREA) has biased composition (basic and acidic residues). The segment covering 188-200 (TPASYSSTKSSIA) has biased composition (polar residues). Low complexity predominate over residues 204-217 (PSSLTPSSSSAAVS). Composition is skewed to polar residues over residues 223 to 234 (NSASSASGSTVP) and 321 to 378 (VAQQ…MTVK). Over residues 402–431 (SPRTLQRQSSQRSPSPGPNHMGSNSSSSSN) the composition is skewed to low complexity. The span at 432-443 (NGGGGGGQGPGV) shows a compositional bias: gly residues. A coiled-coil region spans residues 529-555 (QATLREQRILFLRQQIKELEKLKNQNS).

Its subcellular location is the nucleus. Its function is as follows. Acts as a linker between gene transcription and histone H2B monoubiquitination at 'Lys-120' (H2BK120ub1). Positive regulator of amino acid starvation-induced autophagy. Positively regulates MTOR activity. May negatively regulate the ubiquitin proteasome pathway. In Danio rerio (Zebrafish), this protein is WW domain-containing adapter protein with coiled-coil (waca).